The chain runs to 471 residues: Thymidine phosphorylase (471 aa).

Residues 1–10 show a composition bias toward pro residues; it reads MAAPGTPPPS. The segment at 1–21 is disordered; it reads MAAPGTPPPSASGGGGGEPRQ. Thr6 carries the post-translational modification Phosphothreonine. Residues His102, Arg188, Ser203, and Lys207 each contribute to the substrate site.

This sequence belongs to the thymidine/pyrimidine-nucleoside phosphorylase family. As to quaternary structure, homodimer.

It catalyses the reaction thymidine + phosphate = 2-deoxy-alpha-D-ribose 1-phosphate + thymine. It participates in pyrimidine metabolism; dTMP biosynthesis via salvage pathway; dTMP from thymine: step 1/2. Catalyzes the reversible phosphorolysis of thymidine. The produced molecules are then utilized as carbon and energy sources or in the rescue of pyrimidine bases for nucleotide synthesis. The protein is Thymidine phosphorylase (Tymp) of Mus musculus (Mouse).